Reading from the N-terminus, the 260-residue chain is MVLIRVLANLLILQLSYAQKSSELVIGGVECDINEHRFLAAFFKYQPWTFQCAGTLIHEQWVLGAAHCYKRGLNIYLGMHNQSIQFDDEQRRYAIEEHYYRCDEKLTKWEKDVMLLKLNKPVRNSTHIAPLSLPSSPPSIGSFCRVMGWGIMSSTKDILPDVPHCANIKLVNYTECVAPYPNIPVTTRLWCAGVLEGGIDTCHQDSGGPLICDGQFQGIVAFGRYPCAQPRVPALYTKVSNYTDWIQNIIAGKTTTACPP.

A signal peptide spans 1 to 18 (MVLIRVLANLLILQLSYA). Positions 19–24 (QKSSEL) are excised as a propeptide. A Peptidase S1 domain is found at 25 to 251 (VIGGVECDIN…YTDWIQNIIA (227 aa)). Disulfide bonds link cysteine 31/cysteine 165, cysteine 52/cysteine 68, cysteine 102/cysteine 258, cysteine 144/cysteine 212, cysteine 176/cysteine 191, and cysteine 202/cysteine 227. Histidine 67 serves as the catalytic Charge relay system. A glycan (N-linked (GlcNAc...) asparagine) is linked at asparagine 81. The active-site Charge relay system is aspartate 112. N-linked (GlcNAc...) asparagine glycosylation is found at asparagine 124 and asparagine 172. Serine 206 (charge relay system) is an active-site residue. The N-linked (GlcNAc...) asparagine glycan is linked to asparagine 241.

Belongs to the peptidase S1 family. Snake venom subfamily. In terms of assembly, monomer. As to expression, expressed by the venom gland.

The protein resides in the secreted. In terms of biological role, snake venom serine protease that may act in the hemostasis system of the prey. The chain is Snake venom serine protease Dav-X from Deinagkistrodon acutus (Hundred-pace snake).